We begin with the raw amino-acid sequence, 427 residues long: D-inositol 3-phosphate glycosyltransferase 2 (427 aa).

H14 contributes to the 1D-myo-inositol 3-phosphate binding site. UDP-N-acetyl-alpha-D-glucosamine contacts are provided by residues 20–21 (QP) and G28. 1D-myo-inositol 3-phosphate is bound by residues 25 to 30 (DAGGMN), K83, Y116, T140, and R160. Residues R234, K239, and V300 each contribute to the UDP-N-acetyl-alpha-D-glucosamine site. Y309, R310, and A312 together coordinate Mg(2+). Residues E322 and E330 each contribute to the UDP-N-acetyl-alpha-D-glucosamine site. T336 contacts Mg(2+).

The protein belongs to the glycosyltransferase group 1 family. MshA subfamily. As to quaternary structure, homodimer.

The catalysed reaction is 1D-myo-inositol 3-phosphate + UDP-N-acetyl-alpha-D-glucosamine = 1D-myo-inositol 2-acetamido-2-deoxy-alpha-D-glucopyranoside 3-phosphate + UDP + H(+). In terms of biological role, catalyzes the transfer of a N-acetyl-glucosamine moiety to 1D-myo-inositol 3-phosphate to produce 1D-myo-inositol 2-acetamido-2-deoxy-glucopyranoside 3-phosphate in the mycothiol biosynthesis pathway. The chain is D-inositol 3-phosphate glycosyltransferase 2 from Catenulispora acidiphila (strain DSM 44928 / JCM 14897 / NBRC 102108 / NRRL B-24433 / ID139908).